The following is a 226-amino-acid chain: Ribonuclease 3 (226 aa).

Residues 7 to 129 (DARLQQALGY…LFGAVFLDAG (123 aa)) form the RNase III domain. Position 42 (E42) interacts with Mg(2+). D46 is an active-site residue. Mg(2+)-binding residues include D115 and E118. The active site involves E118. The 71-residue stretch at 156-226 (DPKTRLQEIL…ARQACAELQR (71 aa)) folds into the DRBM domain.

Belongs to the ribonuclease III family. In terms of assembly, homodimer. The cofactor is Mg(2+).

Its subcellular location is the cytoplasm. The catalysed reaction is Endonucleolytic cleavage to 5'-phosphomonoester.. Digests double-stranded RNA. Involved in the processing of primary rRNA transcript to yield the immediate precursors to the large and small rRNAs (23S and 16S). Processes some mRNAs, and tRNAs when they are encoded in the rRNA operon. Processes pre-crRNA and tracrRNA of type II CRISPR loci if present in the organism. This Thiobacillus denitrificans (strain ATCC 25259 / T1) protein is Ribonuclease 3.